The sequence spans 563 residues: Minor fimbrium subunit Mfa1 (563 aa).

Residues 1–19 form the signal peptide; sequence MKLNKMFLVGALLSLGFAS. The N-palmitoyl cysteine moiety is linked to residue Cys20. Cys20 carries S-diacylglycerol cysteine lipidation. Residues 20 to 49 constitute a propeptide that is removed on maturation; it reads CSKEGNGPDPDNAAKSYMSMTLSMPMGSAR. Positions 504-543 are disordered; that stretch reads LVPDPDPSNPENPNNPDPNPDEPGTPVPTDPENPLPDQDT. The segment covering 505–537 has biased composition (pro residues); that stretch reads VPDPDPSNPENPNNPDPNPDEPGTPVPTDPENP.

This sequence belongs to the bacteroidetes fimbrillin superfamily. Structural component of the fimbrial stalk. Minor fimbriae are composed of a structural subunit, most often Mfa1, and the accessory subunits Mfa3, Mfa4 and Mfa5. Mfa1 interacts with Mfa2; this anchors the fimbrium in the membrane. Fimbrium assembly occurs by linear, head-to-tail oligomerization of fimbrial subunits. This is mediated via insertion of a C-terminal beta-strand from one subunit into a groove in the N-terminal domain of the following subunit. Interacts with S.gordonii ssp5.

Its subcellular location is the fimbrium. The protein resides in the cell outer membrane. Structural subunit of the minor fimbriae. These filamentous pili are attached to the cell surface; they mediate biofilm formation, adhesion onto host cells and onto other bacteria that are part of the oral microbiome. They play an important role in invasion of periodontal tissues and are recognized as major virulence factors. Mfa1 orthologs from different strains have highly divergent sequences, and this correlates with pathogenicity. The polypeptide is Minor fimbrium subunit Mfa1 (Porphyromonas gingivalis (strain ATCC 33277 / DSM 20709 / CIP 103683 / JCM 12257 / NCTC 11834 / 2561)).